Consider the following 481-residue polypeptide: Aspartyl/glutamyl-tRNA(Asn/Gln) amidotransferase subunit B (481 aa).

The protein belongs to the GatB/GatE family. GatB subfamily. Heterotrimer of A, B and C subunits.

The enzyme catalyses L-glutamyl-tRNA(Gln) + L-glutamine + ATP + H2O = L-glutaminyl-tRNA(Gln) + L-glutamate + ADP + phosphate + H(+). It catalyses the reaction L-aspartyl-tRNA(Asn) + L-glutamine + ATP + H2O = L-asparaginyl-tRNA(Asn) + L-glutamate + ADP + phosphate + 2 H(+). Allows the formation of correctly charged Asn-tRNA(Asn) or Gln-tRNA(Gln) through the transamidation of misacylated Asp-tRNA(Asn) or Glu-tRNA(Gln) in organisms which lack either or both of asparaginyl-tRNA or glutaminyl-tRNA synthetases. The reaction takes place in the presence of glutamine and ATP through an activated phospho-Asp-tRNA(Asn) or phospho-Glu-tRNA(Gln). The polypeptide is Aspartyl/glutamyl-tRNA(Asn/Gln) amidotransferase subunit B (Pseudomonas fluorescens (strain Pf0-1)).